The sequence spans 224 residues: UPF0758 protein ABO_0214 (224 aa).

Residues 102–224 (PLDNPDKAGQ…WVSLASRGAV (123 aa)) form the MPN domain. Zn(2+) is bound by residues histidine 173, histidine 175, and aspartate 186. The short motif at 173 to 186 (HNHPSGVAEPSQSD) is the JAMM motif element.

Belongs to the UPF0758 family.

In Alcanivorax borkumensis (strain ATCC 700651 / DSM 11573 / NCIMB 13689 / SK2), this protein is UPF0758 protein ABO_0214.